A 260-amino-acid chain; its full sequence is Snake venom serine protease homolog 1 (260 aa).

The first 18 residues, 1-18, serve as a signal peptide directing secretion; the sequence is MVLIRVLANLLLLQLSYA. Residues 19–24 constitute a propeptide that is removed on maturation; that stretch reads QESSEL. Positions 25–251 constitute a Peptidase S1 domain; that stretch reads VIGGDECDIN…YTDWIEGIIA (227 aa). Disulfide bonds link cysteine 31-cysteine 165, cysteine 52-cysteine 68, cysteine 100-cysteine 258, cysteine 144-cysteine 212, cysteine 176-cysteine 191, and cysteine 202-cysteine 227. N-linked (GlcNAc...) asparagine glycosylation occurs at asparagine 253.

It belongs to the peptidase S1 family. Snake venom subfamily. As to expression, expressed by the venom gland.

It is found in the secreted. In terms of biological role, snake venom serine protease homolog that may act in the hemostasis system of the prey. This Bitis gabonica (Gaboon adder) protein is Snake venom serine protease homolog 1.